A 365-amino-acid chain; its full sequence is Alanine racemase (365 aa).

The active-site Proton acceptor; specific for D-alanine is the K32. N6-(pyridoxal phosphate)lysine is present on K32. Substrate is bound at residue R128. Residue Y257 is the Proton acceptor; specific for L-alanine of the active site. M305 serves as a coordination point for substrate.

The protein belongs to the alanine racemase family. It depends on pyridoxal 5'-phosphate as a cofactor.

It carries out the reaction L-alanine = D-alanine. Its pathway is amino-acid biosynthesis; D-alanine biosynthesis; D-alanine from L-alanine: step 1/1. In terms of biological role, catalyzes the interconversion of L-alanine and D-alanine. May also act on other amino acids. In Francisella tularensis subsp. holarctica (strain LVS), this protein is Alanine racemase (alr).